The chain runs to 424 residues: Adenylosuccinate synthetase (424 aa).

GTP-binding positions include 11–17 and 39–41; these read GDEGKGK and GHT. Asp-12 functions as the Proton acceptor in the catalytic mechanism. Mg(2+) is bound by residues Asp-12 and Gly-39. IMP contacts are provided by residues 12–15, 37–40, Thr-127, Arg-141, Gln-223, Thr-238, and Arg-302; these read DEGK and NAGH. Residue His-40 is the Proton donor of the active site. 298–304 provides a ligand contact to substrate; that stretch reads TTTGRGR. GTP is bound by residues Arg-304, 330 to 332, and 412 to 414; these read KLD and SVG.

It belongs to the adenylosuccinate synthetase family. In terms of assembly, homodimer. Mg(2+) is required as a cofactor.

The protein localises to the cytoplasm. It carries out the reaction IMP + L-aspartate + GTP = N(6)-(1,2-dicarboxyethyl)-AMP + GDP + phosphate + 2 H(+). It participates in purine metabolism; AMP biosynthesis via de novo pathway; AMP from IMP: step 1/2. Plays an important role in the de novo pathway of purine nucleotide biosynthesis. Catalyzes the first committed step in the biosynthesis of AMP from IMP. In Methanosarcina barkeri (strain Fusaro / DSM 804), this protein is Adenylosuccinate synthetase.